Consider the following 480-residue polypeptide: UDP-glucose 6-dehydrogenase 3 (480 aa).

NAD(+) is bound by residues 8–13 (GAGYVG), Asp33, Arg38, 86–90 (VNTPT), 127–128 (ST), and Glu161. Residues 157–161 (EFLAE), 216–223 (KLAANAFL), and 256–269 (RIGPKFLNASVGFG) contribute to the substrate site. The active-site Nucleophile is the Cys272. 272–275 (CFQK) lines the NAD(+) pocket. Residue 334 to 335 (FK) participates in substrate binding. Residue Arg342 coordinates NAD(+). Ser393 is modified (phosphoserine). Position 447 (Arg447) interacts with substrate.

It belongs to the UDP-glucose/GDP-mannose dehydrogenase family.

The catalysed reaction is UDP-alpha-D-glucose + 2 NAD(+) + H2O = UDP-alpha-D-glucuronate + 2 NADH + 3 H(+). The protein operates within nucleotide-sugar biosynthesis; UDP-alpha-D-glucuronate biosynthesis; UDP-alpha-D-glucuronate from UDP-alpha-D-glucose: step 1/1. Functionally, involved in the biosynthesis of UDP-glucuronic acid (UDP-GlcA), providing nucleotide sugars for cell-wall polymers. In Oryza sativa subsp. japonica (Rice), this protein is UDP-glucose 6-dehydrogenase 3 (UGD3).